Here is a 250-residue protein sequence, read N- to C-terminus: Cobalt transport protein CbiM (250 aa).

The first 27 residues, 1 to 27 (MKKPLFFIASACVTIYILFALSPSVYA), serve as a signal peptide directing secretion. The next 6 membrane-spanning stretches (helical) occupy residues 33 to 53 (GFLP…FFLV), 70 to 90 (LLLA…IPSV), 102 to 122 (LGAL…VLLF), 134 to 154 (TLGA…YVLF), 168 to 188 (VFLA…IQLA), and 208 to 228 (IFAV…VVVW).

It belongs to the CbiM family. In terms of assembly, forms an energy-coupling factor (ECF) transporter complex composed of an ATP-binding protein (A component, CbiO), a transmembrane protein (T component, CbiQ) and 2 possible substrate-capture proteins (S components, CbiM and CbiN) of unknown stoichimetry.

It localises to the cell membrane. Its pathway is cofactor biosynthesis; adenosylcobalamin biosynthesis. Functionally, part of the energy-coupling factor (ECF) transporter complex CbiMNOQ involved in cobalt import. The polypeptide is Cobalt transport protein CbiM (Anoxybacillus flavithermus (strain DSM 21510 / WK1)).